A 638-amino-acid polypeptide reads, in one-letter code: Trichohyalin-like protein 1 (638 aa).

The EF-hand domain maps to 49–84; the sequence is HVFHAVERKLNLLNFDRDGTISFEEFVLAIFSLLNP. The interval 134–638 is disordered; that stretch reads SEMASSGQPS…ALEAESLEAQ (505 aa). The segment covering 166-179 has biased composition (polar residues); it reads LPRNVSEPNDPENQ. 3 stretches are compositionally biased toward basic and acidic residues: residues 221–246, 294–309, and 318–328; these read IPRE…QRPT, DDTK…KDAG, and EEPKADAKVAE. Residues 343 to 357 show a composition bias toward polar residues; it reads DQSVQSRSRNVSETS. Composition is skewed to basic and acidic residues over residues 358–372, 395–409, 419–435, 479–490, 526–548, and 622–631; these read SRGE…HERI, REND…KDPS, EIKE…HSEE, RIQDKPVRKEDH, AEPH…KQES, and AGRENRKALE.

The protein belongs to the S-100 family.

This is Trichohyalin-like protein 1 (Tchhl1) from Mus musculus (Mouse).